A 489-amino-acid chain; its full sequence is Ammonium transporter MEP3 (489 aa).

Over 1 to 17 (MARGDGHLWTETYDSST) the chain is Extracellular. Residues 18 to 38 (VAFMILGAALVFFMVPGLGFL) traverse the membrane as a helical segment. At 39-48 (YSGLARRKSA) the chain is on the cytoplasmic side. A helical transmembrane segment spans residues 49 to 69 (LALIWVVIMATLVGILQWYFW). The Extracellular segment spans residues 70–108 (GYSLAFSKTATNNKFIGNLDSFGFRNVYGKISDDSTYPE). A helical transmembrane segment spans residues 109 to 129 (LIYAIFQMMFMCVALSIIAGA). Residues 130-139 (TAERGKLFPH) are Cytoplasmic-facing. The helical transmembrane segment at 140 to 160 (MVFLFVFATLVYCPITYWIWA) threads the bilayer. Residues 161 to 173 (PGGWAYQWGVLDW) are Extracellular-facing. A helical membrane pass occupies residues 174-194 (AGGGNIEILSAVAGFVYSYFL). At 195 to 209 (GRRKENLLINFRPHN) the chain is on the cytoplasmic side. A helical transmembrane segment spans residues 210 to 230 (VSMVTLGTSILWFGWLLFNAA). Residues 231–239 (SSLSPNMRS) lie on the Extracellular side of the membrane. The helical transmembrane segment at 240 to 260 (VYAFMNTCLSATTGGMTWCLL) threads the bilayer. Residues 261–267 (DYRSEKK) are Cytoplasmic-facing. The chain crosses the membrane as a helical span at residues 268-288 (WSTVGLCSGIICGLVAATPSS). Position 289 (Gly-289) is a topological domain, extracellular. The chain crosses the membrane as a helical span at residues 290 to 310 (CITLYGSLIQGIIAGVVCNFA). At 311–330 (TKIKYYLKVDDSLDLLAEHG) the chain is on the cytoplasmic side. A helical membrane pass occupies residues 331-351 (IAGVVGLIFNALFAADWVIGM). The Extracellular segment spans residues 352-372 (DGTTKHKGGWLTHNWKQMYIQ). A helical membrane pass occupies residues 373–393 (IAYIGASAGYCAVVTAIICFV). Residues 394-489 (LGKIPGVHLR…NPKLHHAKEA (96 aa)) lie on the Cytoplasmic side of the membrane. The span at 448–481 (GANSASETNPTEDSQNSSLSSATVSGQNEKSNNP) shows a compositional bias: polar residues. Residues 448–489 (GANSASETNPTEDSQNSSLSSATVSGQNEKSNNPKLHHAKEA) are disordered.

This sequence belongs to the ammonia transporter channel (TC 1.A.11.2) family.

It is found in the membrane. In terms of biological role, transporter for ammonium (both charged and uncharged NH3 and NH4) to use as a nitrogen source. The affinity of MEP2 is about twenty times higher than that of MEP1. MEP3 has the lowest affinity. This is Ammonium transporter MEP3 (MEP3) from Saccharomyces cerevisiae (strain ATCC 204508 / S288c) (Baker's yeast).